The primary structure comprises 876 residues: Alanine--tRNA ligase (876 aa).

Zn(2+) contacts are provided by His-568, His-572, Cys-670, and His-674.

The protein belongs to the class-II aminoacyl-tRNA synthetase family. Requires Zn(2+) as cofactor.

The protein localises to the cytoplasm. It catalyses the reaction tRNA(Ala) + L-alanine + ATP = L-alanyl-tRNA(Ala) + AMP + diphosphate. Catalyzes the attachment of alanine to tRNA(Ala) in a two-step reaction: alanine is first activated by ATP to form Ala-AMP and then transferred to the acceptor end of tRNA(Ala). Also edits incorrectly charged Ser-tRNA(Ala) and Gly-tRNA(Ala) via its editing domain. This chain is Alanine--tRNA ligase, found in Geotalea uraniireducens (strain Rf4) (Geobacter uraniireducens).